A 259-amino-acid polypeptide reads, in one-letter code: Phosphatidylglycerol--prolipoprotein diacylglyceryl transferase (259 aa).

4 consecutive transmembrane segments (helical) span residues 16-36 (LAIS…WFYA), 55-75 (FITY…VLLY), 92-112 (EGGM…YLFC), and 117-137 (INFL…LFLG). Arg-138 contributes to the a 1,2-diacyl-sn-glycero-3-phospho-(1'-sn-glycerol) binding site. Transmembrane regions (helical) follow at residues 172 to 192 (QLYE…YATF), 201 to 221 (GLNS…IEIF), and 228 to 248 (IGFI…MLLL).

This sequence belongs to the Lgt family.

It is found in the cell inner membrane. It catalyses the reaction L-cysteinyl-[prolipoprotein] + a 1,2-diacyl-sn-glycero-3-phospho-(1'-sn-glycerol) = an S-1,2-diacyl-sn-glyceryl-L-cysteinyl-[prolipoprotein] + sn-glycerol 1-phosphate + H(+). It functions in the pathway protein modification; lipoprotein biosynthesis (diacylglyceryl transfer). In terms of biological role, catalyzes the transfer of the diacylglyceryl group from phosphatidylglycerol to the sulfhydryl group of the N-terminal cysteine of a prolipoprotein, the first step in the formation of mature lipoproteins. This chain is Phosphatidylglycerol--prolipoprotein diacylglyceryl transferase, found in Rickettsia rickettsii (strain Iowa).